The sequence spans 763 residues: Phosphoglycerol transferase I (763 aa).

Transmembrane regions (helical) follow at residues 1–21, 26–46, 77–97, and 108–128; these read MSELLSVALFLASVLIYAWKA, WWFAATLTVLGLFVILNITLY, ILPGIGIALALVAVFGALGWV, and VGYSLLALLLALGSVDASPAF.

The protein belongs to the OpgB family.

It is found in the cell inner membrane. It carries out the reaction a phosphatidylglycerol + a membrane-derived-oligosaccharide D-glucose = a 1,2-diacyl-sn-glycerol + a membrane-derived-oligosaccharide 6-(glycerophospho)-D-glucose.. It functions in the pathway glycan metabolism; osmoregulated periplasmic glucan (OPG) biosynthesis. Its function is as follows. Transfers a phosphoglycerol residue from phosphatidylglycerol to the membrane-bound nascent glucan backbones. This Salmonella dublin (strain CT_02021853) protein is Phosphoglycerol transferase I.